We begin with the raw amino-acid sequence, 361 residues long: D-alanine--D-alanine ligase (361 aa).

One can recognise an ATP-grasp domain in the interval 134 to 344 (KLLLKSFDIP…FKDLVDNLID (211 aa)). 167-222 (KEVLGYPVIVKPAVLGSSIGINVAYSENQIESFIKEALKYDLTIVIEKFIEAREIE) lines the ATP pocket. Mg(2+)-binding residues include aspartate 297, glutamate 311, and asparagine 313.

The protein belongs to the D-alanine--D-alanine ligase family. It depends on Mg(2+) as a cofactor. Requires Mn(2+) as cofactor.

It localises to the cytoplasm. The catalysed reaction is 2 D-alanine + ATP = D-alanyl-D-alanine + ADP + phosphate + H(+). Its pathway is cell wall biogenesis; peptidoglycan biosynthesis. Cell wall formation. This chain is D-alanine--D-alanine ligase, found in Borreliella burgdorferi (strain ZS7) (Borrelia burgdorferi).